The following is a 136-amino-acid chain: Histone H3 (136 aa).

Positions 1-42 (MARTKQTARKSTGGKAPRKQIAAKAARKAAPSTGGVKKPHRY) are disordered. Lys-5 carries the post-translational modification N6,N6,N6-trimethyllysine; alternate. Lys-5 bears the N6,N6-dimethyllysine; alternate mark. N6-methyllysine; alternate is present on residues Lys-5 and Lys-10. At Lys-10 the chain carries N6-acetyllysine; alternate. Ser-11 carries the phosphoserine modification. N6,N6-dimethyllysine; alternate is present on Lys-15. N6-acetyllysine; alternate occurs at positions 15, 19, 24, 28, and 37. N6-methyllysine; alternate is present on residues Lys-19, Lys-24, Lys-28, and Lys-37. Positions 19–31 (KQIAAKAARKAAP) are enriched in low complexity. N6,N6,N6-trimethyllysine; alternate is present on residues Lys-28 and Lys-37. N6,N6-dimethyllysine; alternate occurs at positions 28 and 37. 2 positions are modified to N6-acetyllysine: Lys-57 and Lys-65. An N6,N6,N6-trimethyllysine; alternate modification is found at Lys-80. Lys-80 is subject to N6,N6-dimethyllysine; alternate. Position 80 is an N6-methyllysine; alternate (Lys-80).

It belongs to the histone H3 family. As to quaternary structure, the nucleosome is a histone octamer containing two molecules each of H2A, H2B, H3 and H4 assembled in one H3-H4 heterotetramer and two H2A-H2B heterodimers. The octamer wraps approximately 147 bp of DNA. In terms of processing, phosphorylated to form H3S10ph. H3S10ph promotes subsequent H3K14ac formation and is required for transcriptional activation through TBP recruitment to the promoters. Mono-, di- and trimethylated by the COMPASS complex to form H3K4me1/2/3. H3K4me activates gene expression by regulating transcription elongation and plays a role in telomere length maintenance. H3K4me enrichment correlates with transcription levels, and occurs in a 5' to 3' gradient with H3K4me3 enrichment at the 5'-end of genes, shifting to H3K4me2 and then H3K4me1. Methylated by SET2 to form H3K36me. H3K36me represses gene expression. Methylated by DOT1 to form H3K79me. H3K79me is required for association of SIR proteins with telomeric regions and for telomeric silencing. The COMPASS-mediated formation of H3K4me2/3 and the DOT1-mediated formation of H3K79me require H2BK123ub1. Post-translationally, acetylation of histone H3 leads to transcriptional activation. H3K14ac formation by GCN5 is promoted by H3S10ph. H3K14ac can also be formed by ESA1. H3K56ac formation occurs predominantly in newly synthesized H3 molecules during G1, S and G2/M of the cell cycle and may be involved in DNA repair.

The protein localises to the nucleus. It is found in the chromosome. Its function is as follows. Core component of nucleosome. Nucleosomes wrap and compact DNA into chromatin, limiting DNA accessibility to the cellular machineries which require DNA as a template. Histones thereby play a central role in transcription regulation, DNA repair, DNA replication and chromosomal stability. DNA accessibility is regulated via a complex set of post-translational modifications of histones, also called histone code, and nucleosome remodeling. This chain is Histone H3 (HHT1), found in Coccidioides immitis (strain RS) (Valley fever fungus).